Here is a 70-residue protein sequence, read N- to C-terminus: Cytochrome c oxidase subunit 8B, mitochondrial (70 aa).

The transit peptide at 1–24 (MLSLRPALRLLQAPLRCWAVPKAH) directs the protein to the mitochondrion. Residues 25–35 (VSAKPAETPTS) are Mitochondrial matrix-facing. Residues 36–59 (PAEQAVGLSFIFITFLGPAGWILS) traverse the membrane as a helical segment. Over 60–70 (HVENYKKRPRA) the chain is Mitochondrial intermembrane.

This sequence belongs to the cytochrome c oxidase VIII family. In terms of assembly, component of the cytochrome c oxidase (complex IV, CIV), a multisubunit enzyme composed of 14 subunits. The complex is composed of a catalytic core of 3 subunits MT-CO1, MT-CO2 and MT-CO3, encoded in the mitochondrial DNA, and 11 supernumerary subunits COX4I, COX5A, COX5B, COX6A, COX6B, COX6C, COX7A, COX7B, COX7C, COX8 and NDUFA4, which are encoded in the nuclear genome. The complex exists as a monomer or a dimer and forms supercomplexes (SCs) in the inner mitochondrial membrane with NADH-ubiquinone oxidoreductase (complex I, CI) and ubiquinol-cytochrome c oxidoreductase (cytochrome b-c1 complex, complex III, CIII), resulting in different assemblies (supercomplex SCI(1)III(2)IV(1) and megacomplex MCI(2)III(2)IV(2)).

The protein resides in the mitochondrion inner membrane. The protein operates within energy metabolism; oxidative phosphorylation. Its function is as follows. Component of the cytochrome c oxidase, the last enzyme in the mitochondrial electron transport chain which drives oxidative phosphorylation. The respiratory chain contains 3 multisubunit complexes succinate dehydrogenase (complex II, CII), ubiquinol-cytochrome c oxidoreductase (cytochrome b-c1 complex, complex III, CIII) and cytochrome c oxidase (complex IV, CIV), that cooperate to transfer electrons derived from NADH and succinate to molecular oxygen, creating an electrochemical gradient over the inner membrane that drives transmembrane transport and the ATP synthase. Cytochrome c oxidase is the component of the respiratory chain that catalyzes the reduction of oxygen to water. Electrons originating from reduced cytochrome c in the intermembrane space (IMS) are transferred via the dinuclear copper A center (CU(A)) of subunit 2 and heme A of subunit 1 to the active site in subunit 1, a binuclear center (BNC) formed by heme A3 and copper B (CU(B)). The BNC reduces molecular oxygen to 2 water molecules using 4 electrons from cytochrome c in the IMS and 4 protons from the mitochondrial matrix. The sequence is that of Cytochrome c oxidase subunit 8B, mitochondrial (COX8B) from Ateles belzebuth (White-bellied spider monkey).